The chain runs to 417 residues: Phosphoglycerate kinase (417 aa).

14 residues coordinate (2R)-3-phosphoglycerate: V23, D24, F25, N26, Q39, R40, S63, H64, G66, R67, L122, R123, H170, and R171. Residue S203 is modified to Phosphoserine. G214 lines the ADP pocket. G214 is a CDP binding site. Residues A215 and K216 each contribute to the AMP site. An ATP-binding site is contributed by A215. A215 is a binding site for Mg(2+). Residue D219 coordinates CDP. D219 is a binding site for Mg(2+). Position 220 (K220) interacts with AMP. An ATP-binding site is contributed by K220. G238 provides a ligand contact to ADP. G238 lines the CDP pocket. A239 and G313 together coordinate AMP. The ATP site is built by A239 and G313. The CDP site is built by G338 and F343. F343 lines the ADP pocket. Residue E344 participates in AMP binding. ATP is bound by residues E344, D375, and T376. A Mg(2+)-binding site is contributed by D375.

The protein belongs to the phosphoglycerate kinase family. Monomer. Mg(2+) serves as cofactor. Dephosphorylated by PTC1 and PTC2 at Ser-203; the protein is cytosolic when dephosphorylated.

It is found in the cytoplasm. The protein resides in the cytosol. Its subcellular location is the mitochondrion. It carries out the reaction (2R)-3-phosphoglycerate + ATP = (2R)-3-phospho-glyceroyl phosphate + ADP. The protein operates within carbohydrate degradation; glycolysis; pyruvate from D-glyceraldehyde 3-phosphate: step 2/5. Catalyzes one of the two ATP producing reactions in the glycolytic pathway via the reversible conversion of 1,3-diphosphoglycerate to 3-phosphoglycerate. Both L- and D- forms of purine and pyrimidine nucleotides can be used as substrates, but the activity is much lower on pyrimidines. Negatively regulates the biosynthesis of acetyl-CoA from pyruvate in the mitochondrion and consequently also attenuates aflatoxin production. This is Phosphoglycerate kinase from Aspergillus flavus (strain ATCC 200026 / FGSC A1120 / IAM 13836 / NRRL 3357 / JCM 12722 / SRRC 167).